The chain runs to 120 residues: Protein VraC (120 aa).

The protein is Protein VraC of Staphylococcus epidermidis (strain ATCC 12228 / FDA PCI 1200).